Here is a 330-residue protein sequence, read N- to C-terminus: Phosphate acyltransferase (330 aa).

This sequence belongs to the PlsX family. In terms of assembly, homodimer. Probably interacts with PlsY.

The protein localises to the cytoplasm. The enzyme catalyses a fatty acyl-[ACP] + phosphate = an acyl phosphate + holo-[ACP]. The protein operates within lipid metabolism; phospholipid metabolism. Catalyzes the reversible formation of acyl-phosphate (acyl-PO(4)) from acyl-[acyl-carrier-protein] (acyl-ACP). This enzyme utilizes acyl-ACP as fatty acyl donor, but not acyl-CoA. This Streptococcus pneumoniae serotype 2 (strain D39 / NCTC 7466) protein is Phosphate acyltransferase.